Reading from the N-terminus, the 509-residue chain is L-aspartate semialdehyde sulfurtransferase (509 aa).

Cys133 functions as the Cysteine persulfide intermediate in the catalytic mechanism. CBS domains follow at residues 394 to 450 (LSKP…NKKT) and 455 to 509 (MTRN…GGKK). Residues Ser395, Ile399, and His421 each contribute to the S-methyl-5'-thioadenosine site. S-adenosyl-L-methionine contacts are provided by residues Asp439, Thr456, Ile460, and 479 to 482 (NISG). Residue 497-500 (TSED) participates in S-methyl-5'-thioadenosine binding.

This sequence belongs to the L-aspartate semialdehyde sulfurtransferase family. Homodimer. May form a complex with MJ0099.

The enzyme catalyses L-aspartate 4-semialdehyde + reduced 2[4Fe-4S]-[ferredoxin] + hydrogen sulfide + 3 H(+) = oxidized 2[4Fe-4S]-[ferredoxin] + L-homocysteine + H2O. It participates in amino-acid biosynthesis. With respect to regulation, the ligand-induced conformational reorganization of the protein could be an important regulatory mechanism. In terms of biological role, required for O-acetylhomoserine sulfhydrylase (OAHS)-independent homocysteine (Hcy) biosynthesis. Together with MJ0099, catalyzes the condensation of sulfide with aspartate semialdehyde to generate homocysteine. Likely functions through persulfide intermediate. The protein is L-aspartate semialdehyde sulfurtransferase of Methanocaldococcus jannaschii (strain ATCC 43067 / DSM 2661 / JAL-1 / JCM 10045 / NBRC 100440) (Methanococcus jannaschii).